The chain runs to 123 residues: Large ribosomal subunit protein uL18 (123 aa).

It belongs to the universal ribosomal protein uL18 family. As to quaternary structure, part of the 50S ribosomal subunit; part of the 5S rRNA/L5/L18/L25 subcomplex. Contacts the 5S and 23S rRNAs.

Its function is as follows. This is one of the proteins that bind and probably mediate the attachment of the 5S RNA into the large ribosomal subunit, where it forms part of the central protuberance. The chain is Large ribosomal subunit protein uL18 from Bifidobacterium animalis subsp. lactis (strain AD011).